The chain runs to 398 residues: Cytohesin-1 (398 aa).

Met-1 is modified (N-acetylmethionine). Residues 1-60 (MEDDDSYVPSDLTAEERQELENIRRRKQELLADIQRLKEEIAEVANEIESLGSTEERKNM) are necessary for localization at adherens junction. The stretch at 10–67 (SDLTAEERQELENIRRRKQELLADIQRLKEEIAEVANEIESLGSTEERKNMQRNKQVA) forms a coiled coil. The SEC7 domain maps to 73–202 (FNMDPKKGIQ…IIMLNTSLHN (130 aa)). A PH domain is found at 260 to 377 (NPDREGWLLK…WIKCIKAAIS (118 aa)). A 1,2-diacyl-sn-glycero-3-phospho-(1D-myo-inositol-3,4,5-trisphosphate) is bound by residues 269-277 (KLGGGRVKT), Arg-281, Tyr-292, Arg-302, and Asn-351. The C-terminal autoinhibitory region stretch occupies residues 388–396 (RKKKVSSTK).

Interacts with TRIM23 and CYTIP. Interacts (via coiled-coil domain) with FRMD4A (via coiled-coil domain). Interacts with FRMD4B. Found in a complex with PARD3, CYTH1 and FRMD4A. Interacts (via N-terminal domain) with INAVA (via N-terminal domain). Post-translationally, ubiquitinated by SCF(FBXW11) E3 ubiquitin-protein ligase complex. Ubiquitination induces proteasomal degradation. In terms of tissue distribution, expressed in colon and small intestine (at protein level).

The protein localises to the cell membrane. Its subcellular location is the cytoplasm. The protein resides in the cytosol. It is found in the cell junction. It localises to the tight junction. The protein localises to the adherens junction. Functionally, promotes guanine-nucleotide exchange on ARF1, ARF5 and ARF6. Promotes the activation of ARF factors through replacement of GDP with GTP. Plays an important role in membrane trafficking, during junctional remodeling and epithelial polarization, through regulation of ARF6 activity. The chain is Cytohesin-1 (Cyth1) from Mus musculus (Mouse).